Consider the following 480-residue polypeptide: Glucosylglycerol phosphorylase (480 aa).

Asp190 acts as the Nucleophile in catalysis. Position 194 (Tyr194) interacts with substrate. The active-site Proton donor is Glu231. Gln336 is a substrate binding site.

Belongs to the glycosyl hydrolase 13 family. Sucrose phosphorylase subfamily.

It catalyses the reaction 2-O-(alpha-D-glucopyranosyl)glycerol + phosphate = alpha-D-glucose 1-phosphate + glycerol. In terms of biological role, catalyzes the reversible phosphorolysis of 2-O-alpha-D-glucosylglycerol with retention of the anomeric configuration, forming alpha-D-glucose 1-phosphate and glycerol. Has most likely a catabolic role, either regulating the intracellular levels of glucosylglycerol, which acts as a compatible solute, or degrading it when the environmental conditions change. Cannot catalyze the phosphorolysis of sucrose or glucosylglycerate. This chain is Glucosylglycerol phosphorylase, found in Marinobacter adhaerens (strain DSM 23420 / HP15).